The chain runs to 196 residues: SAGA-associated factor 11 homolog (196 aa).

Residues 1–22 (MSAANMPTTTGAQGSGNQVPTT) are disordered. The segment at 106–127 (CTCPNCDRLVAAARFAPHLEKC) adopts an SGF11-type zinc-finger fold. The segment at 144-196 (TKEGATSAHLHSAGNTGGTDDEDDVDWSSDKRRKKSNQNSRNNGSKKNNGKSF) is disordered. The residue at position 172 (Ser-172) is a Phosphoserine. Over residues 180–196 (NQNSRNNGSKKNNGKSF) the composition is skewed to low complexity.

It belongs to the SGF11 family. As to quaternary structure, component of some SAGA transcription coactivator-HAT complexes, at least composed of Ada2b, not/nonstop, Pcaf/Gcn5, Sgf11 and Spt3. Within the SAGA complex, Sgf11, e(y)2, and not/nonstop form an additional subcomplex of SAGA called the DUB module (deubiquitination module). Interacts directly with not/nonstop. Interacts with the AMEX complex component xmas-2. Interacts with Cbp80; important for promoter recruitment of Sgf11 that is not associated with the DUB module.

The protein localises to the nucleus. Its subcellular location is the nucleoplasm. The protein resides in the cytoplasm. Component of the transcription regulatory histone acetylation (HAT) complex SAGA, a multiprotein complex that activates transcription by remodeling chromatin and mediating histone acetylation and deubiquitination. Within the SAGA complex, participates in a subcomplex that specifically deubiquitinates histone H2B. The SAGA complex is recruited to specific gene promoters by activators, where it is required for transcription. Required for nuclear receptor-mediated transactivation. Binds independently on SAGA to promoters in an RNA-dependent manner. Binds to mRNA and is essential for total mRNA export from the nucleus. Required to counteract heterochromatin silencing. Controls the development of neuronal connectivity in visual system by being required for accurate axon targeting in the optic lobe. Required for expression of ecdysone-induced genes such as br/broad. This is SAGA-associated factor 11 homolog from Drosophila erecta (Fruit fly).